Here is a 108-residue protein sequence, read N- to C-terminus: Protein YcgL (108 aa).

Residues 12–96 enclose the YcgL domain; that stretch reads MFCVIYRSSK…PPEDLLKQHL (85 aa).

The sequence is that of Protein YcgL from Shigella sonnei (strain Ss046).